The following is a 514-amino-acid chain: Serine/threonine protein phosphatase PstP (514 aa).

The Cytoplasmic segment spans residues 1 to 302 (MARVTLVLRY…RPRWSGRRLA (302 aa)). In terms of domain architecture, PPM-type phosphatase spans 9 to 238 (RYAARSDRGL…DNVTVVVADV (230 aa)). D38, G39, D118, S160, D191, and D229 together coordinate Mn(2+). Residues 303-323 (FVVALVTVLMTAGLLIGRAII) form a helical membrane-spanning segment. Topologically, residues 324–514 (RSNYYVADYA…QPGIDCRAAA (191 aa)) are extracellular. A disordered region spans residues 420 to 514 (LLPPCPAPRA…QPGIDCRAAA (95 aa)). Positions 440–480 (TTSETTEPNVTSSPASPSPTTSASAPTGTTPAIPTSASPAA) are enriched in low complexity.

Mn(2+) is required as a cofactor.

It is found in the cell membrane. The enzyme catalyses O-phospho-L-seryl-[protein] + H2O = L-seryl-[protein] + phosphate. It carries out the reaction O-phospho-L-threonyl-[protein] + H2O = L-threonyl-[protein] + phosphate. Plays an important role in regulating cell division and growth by reversible phosphorylation signaling. May play important roles in regulating cellular metabolism and signaling pathways, which could mediate the growth and development of the cell. Plays a role in establishing and maintaining infection. This is Serine/threonine protein phosphatase PstP (pstP) from Mycobacterium tuberculosis (strain CDC 1551 / Oshkosh).